The sequence spans 199 residues: Small heat shock protein hspG4 (199 aa).

The sHSP domain maps to 30-199 (NKRVDIIPSM…SSNTIKININ (170 aa)). The interval 83-105 (KNQQQQQQQQQLENSNNKENDEP) is disordered.

The protein belongs to the small heat shock protein (HSP20) family.

The polypeptide is Small heat shock protein hspG4 (hspG4) (Dictyostelium discoideum (Social amoeba)).